The primary structure comprises 85 residues: U4-theraphotoxin-Hhn1a (85 aa).

The first 22 residues, 1–22, serve as a signal peptide directing secretion; sequence MKVTLIVILTCAAVLVLHTTAA. Residues 23-48 constitute a propeptide that is removed on maturation; it reads EELEAESQLMEVGMPDTELAAVDEER. Intrachain disulfides connect cysteine 52–cysteine 66, cysteine 56–cysteine 77, and cysteine 71–cysteine 82.

Belongs to the neurotoxin 12 (Hwtx-2) family. 02 (Hwtx-2) subfamily. Monomer. As to expression, expressed by the venom gland.

It is found in the secreted. Its function is as follows. Neurotoxin active on both insects and mammals. This is U4-theraphotoxin-Hhn1a from Cyriopagopus hainanus (Chinese bird spider).